Here is a 687-residue protein sequence, read N- to C-terminus: Macrolide export ATP-binding/permease protein MacB (687 aa).

In terms of domain architecture, ABC transporter spans 6–244 (LKLAAVTRRF…LAEAGVDAAE (239 aa)). 42-49 (GASGSGKS) provides a ligand contact to ATP. Low complexity predominate over residues 246 to 256 (AEASEAAVGES). Residues 246-281 (AEASEAAVGESPTRNRHDTPAPPAAVDTDPHVDTGT) are disordered. 4 consecutive transmembrane segments (helical) span residues 312–332 (LLTM…VAIG), 560–580 (LTLL…IGVM), 617–637 (LVCL…GALF), and 650–670 (AGAI…FGFM).

It belongs to the ABC transporter superfamily. Macrolide exporter (TC 3.A.1.122) family. In terms of assembly, homodimer.

It localises to the cell inner membrane. Its function is as follows. Non-canonical ABC transporter that contains transmembrane domains (TMD), which form a pore in the inner membrane, and an ATP-binding domain (NBD), which is responsible for energy generation. Confers resistance against macrolides. The chain is Macrolide export ATP-binding/permease protein MacB from Burkholderia lata (strain ATCC 17760 / DSM 23089 / LMG 22485 / NCIMB 9086 / R18194 / 383).